We begin with the raw amino-acid sequence, 237 residues long: Isoprenyl transferase (237 aa).

Asp14 is a catalytic residue. A Mg(2+)-binding site is contributed by Asp14. Substrate contacts are provided by residues 15 to 18 (GNGR), Trp19, Arg27, His31, and 59 to 61 (STE). Catalysis depends on Asn62, which acts as the Proton acceptor. Residues Trp63, Arg65, Arg184, and 190–192 (RIS) contribute to the substrate site. Position 203 (Glu203) interacts with Mg(2+).

This sequence belongs to the UPP synthase family. As to quaternary structure, homodimer. It depends on Mg(2+) as a cofactor.

Its function is as follows. Catalyzes the condensation of isopentenyl diphosphate (IPP) with allylic pyrophosphates generating different type of terpenoids. This chain is Isoprenyl transferase, found in Helicobacter hepaticus (strain ATCC 51449 / 3B1).